We begin with the raw amino-acid sequence, 546 residues long: Chaperonin GroEL (546 aa).

ATP contacts are provided by residues 29–32 (TLGP), Lys-50, 86–90 (DGTTT), Gly-414, and Asp-495. Positions 526-546 (AKEGAPAGGGMPDMGGMGGMM) are disordered. The segment covering 531 to 546 (PAGGGMPDMGGMGGMM) has biased composition (gly residues).

This sequence belongs to the chaperonin (HSP60) family. Forms a cylinder of 14 subunits composed of two heptameric rings stacked back-to-back. Interacts with the co-chaperonin GroES.

It is found in the cytoplasm. It carries out the reaction ATP + H2O + a folded polypeptide = ADP + phosphate + an unfolded polypeptide.. Functionally, together with its co-chaperonin GroES, plays an essential role in assisting protein folding. The GroEL-GroES system forms a nano-cage that allows encapsulation of the non-native substrate proteins and provides a physical environment optimized to promote and accelerate protein folding. The sequence is that of Chaperonin GroEL from Jannaschia sp. (strain CCS1).